The chain runs to 307 residues: Elongation factor Ts (307 aa).

The involved in Mg(2+) ion dislocation from EF-Tu stretch occupies residues 80-83 (TDFV).

The protein belongs to the EF-Ts family.

The protein resides in the cytoplasm. Functionally, associates with the EF-Tu.GDP complex and induces the exchange of GDP to GTP. It remains bound to the aminoacyl-tRNA.EF-Tu.GTP complex up to the GTP hydrolysis stage on the ribosome. This is Elongation factor Ts from Rhizorhabdus wittichii (strain DSM 6014 / CCUG 31198 / JCM 15750 / NBRC 105917 / EY 4224 / RW1) (Sphingomonas wittichii).